Here is a 184-residue protein sequence, read N- to C-terminus: ATP synthase subunit b (184 aa).

Residues I24–P44 traverse the membrane as a helical segment.

It belongs to the ATPase B chain family. F-type ATPases have 2 components, F(1) - the catalytic core - and F(0) - the membrane proton channel. F(1) has five subunits: alpha(3), beta(3), gamma(1), delta(1), epsilon(1). F(0) has three main subunits: a(1), b(2) and c(10-14). The alpha and beta chains form an alternating ring which encloses part of the gamma chain. F(1) is attached to F(0) by a central stalk formed by the gamma and epsilon chains, while a peripheral stalk is formed by the delta and b chains.

It localises to the cell membrane. In terms of biological role, f(1)F(0) ATP synthase produces ATP from ADP in the presence of a proton or sodium gradient. F-type ATPases consist of two structural domains, F(1) containing the extramembraneous catalytic core and F(0) containing the membrane proton channel, linked together by a central stalk and a peripheral stalk. During catalysis, ATP synthesis in the catalytic domain of F(1) is coupled via a rotary mechanism of the central stalk subunits to proton translocation. Component of the F(0) channel, it forms part of the peripheral stalk, linking F(1) to F(0). The protein is ATP synthase subunit b (atpF) of Micrococcus luteus (strain ATCC 4698 / DSM 20030 / JCM 1464 / CCM 169 / CCUG 5858 / IAM 1056 / NBRC 3333 / NCIMB 9278 / NCTC 2665 / VKM Ac-2230) (Micrococcus lysodeikticus).